The following is a 1208-amino-acid chain: DNA-directed RNA polymerase subunit beta (1208 aa).

Positions 1182 to 1208 are disordered; sequence EKKAAEQVEDEKDDVIQNFETAEDNLD.

It belongs to the RNA polymerase beta chain family. As to quaternary structure, the RNAP catalytic core consists of 2 alpha, 1 beta, 1 beta' and 1 omega subunit. When a sigma factor is associated with the core the holoenzyme is formed, which can initiate transcription.

The enzyme catalyses RNA(n) + a ribonucleoside 5'-triphosphate = RNA(n+1) + diphosphate. Functionally, DNA-dependent RNA polymerase catalyzes the transcription of DNA into RNA using the four ribonucleoside triphosphates as substrates. The protein is DNA-directed RNA polymerase subunit beta of Enterococcus faecium (Streptococcus faecium).